Reading from the N-terminus, the 804-residue chain is Elongation factor G, mitochondrial (804 aa).

A mitochondrion-targeting transit peptide spans 1–9; sequence MVRPAQVRA. The tr-type G domain maps to 103-389; it reads SKVRNIGIAA…GVCDYLPNPS (287 aa). Residues 112–119, 187–191, and 241–244 each bind GTP; these read AHIDSGKT, DTPGH, and NKMD.

This sequence belongs to the TRAFAC class translation factor GTPase superfamily. Classic translation factor GTPase family. EF-G/EF-2 subfamily.

The protein localises to the mitochondrion. It functions in the pathway protein biosynthesis; polypeptide chain elongation. Mitochondrial GTPase that catalyzes the GTP-dependent ribosomal translocation step during translation elongation. During this step, the ribosome changes from the pre-translocational (PRE) to the post-translocational (POST) state as the newly formed A-site-bound peptidyl-tRNA and P-site-bound deacylated tRNA move to the P and E sites, respectively. Catalyzes the coordinated movement of the two tRNA molecules, the mRNA and conformational changes in the ribosome. The sequence is that of Elongation factor G, mitochondrial (mef1) from Talaromyces stipitatus (strain ATCC 10500 / CBS 375.48 / QM 6759 / NRRL 1006) (Penicillium stipitatum).